Here is a 414-residue protein sequence, read N- to C-terminus: MKLHCEVEVISRHLPALGLRNRGKGVRAVLSLCQQTSRSQPPVRAFLLISTLKDKRGTRYELRENIEQFFTKFVDEGKATVRLKEPPVDICLSKAISSSLKGFLSAMRLAHRGCNVDTPVSTLTPVKTSEFENFKTKMVITSKKDYPLSKNFPYSLEHLQTSYCGLVRVDMRMLCLKSLRKLDLSHNHIKKLPATIGDLIHLQELNLNDNHLESFSVALCHSTLQKSLRSLDLSKNKIKALPVQFCQLQELKNLKLDDNELIQFPCKIGQLINLRFLSAARNKLPFLPSEFRNLSLEYLDLFGNTFEQPKVLPVIKLQAPLTLLESSARTILHNRIPYGSHIIPFHLCQDLDTAKICVCGRFCLNSFIQGTTTMNLHSVAHTVVLVDNLGGTEAPIISYFCSLGCYVNSSDMLK.

7 LRR repeats span residues serine 155–leucine 176, serine 178–leucine 199, histidine 201–serine 222, serine 227–leucine 248, glutamate 250–leucine 271, asparagine 273–leucine 294, and serine 295–lysine 316.

Component of the probable ECS(LRR1) E3 ubiquitin-protein ligase complex which contains CUL2, RBX1, Elongin BC complex and LRR1. Interacts with CUL2, RBX1, ELOB and ELOC. As to expression, ubiquitous. Maximal expression was seen in the heart and skeletal muscle and minimal expression seen in the kidney.

It is found in the nucleus. The protein operates within protein modification; protein ubiquitination. Functionally, substrate recognition subunit of an ECS (Elongin BC-CUL2/5-SOCS-box protein) E3 ubiquitin-protein ligase complex which mediates the ubiquitination and subsequent proteasomal degradation of target proteins. ECS(LRR1) ubiquitinates MCM7 and promotes CMG replisome disassembly by VCP and chromatin extraction during S-phase. May negatively regulate the 4-1BB-mediated signaling cascades which result in the activation of NK-kappaB and JNK1. The chain is Leucine-rich repeat protein 1 from Homo sapiens (Human).